The following is a 356-amino-acid chain: Phospho-N-acetylmuramoyl-pentapeptide-transferase (356 aa).

10 helical membrane passes run 25–45 (TVAAMLTSGLIVFLFGPSIIA), 70–90 (GTPTMGGLMILTGIVVSAFLW), 93–113 (LSNIYFWVSLFVMLSFGMIGF), 138–158 (FLIAIIAAFVLLQVGSSGLAL), 164–184 (YFINLSWFFLPFSAFVIVGTG), 195–215 (GLAIVPVMVAALSFALIAYLS), 235–255 (LAVLLGAVVGAGLGFLWFNAP), 258–278 (AIFMGDTGSLALGGLLGIVAV), 284–304 (IVLALIGGLFVLEGFSVVIQV), and 333–353 (QVVIRFWIISIVLALVGLSTL).

It belongs to the glycosyltransferase 4 family. MraY subfamily. It depends on Mg(2+) as a cofactor.

Its subcellular location is the cell inner membrane. It catalyses the reaction UDP-N-acetyl-alpha-D-muramoyl-L-alanyl-gamma-D-glutamyl-meso-2,6-diaminopimeloyl-D-alanyl-D-alanine + di-trans,octa-cis-undecaprenyl phosphate = di-trans,octa-cis-undecaprenyl diphospho-N-acetyl-alpha-D-muramoyl-L-alanyl-D-glutamyl-meso-2,6-diaminopimeloyl-D-alanyl-D-alanine + UMP. Its pathway is cell wall biogenesis; peptidoglycan biosynthesis. In terms of biological role, catalyzes the initial step of the lipid cycle reactions in the biosynthesis of the cell wall peptidoglycan: transfers peptidoglycan precursor phospho-MurNAc-pentapeptide from UDP-MurNAc-pentapeptide onto the lipid carrier undecaprenyl phosphate, yielding undecaprenyl-pyrophosphoryl-MurNAc-pentapeptide, known as lipid I. The polypeptide is Phospho-N-acetylmuramoyl-pentapeptide-transferase (Bartonella quintana (strain Toulouse) (Rochalimaea quintana)).